The sequence spans 359 residues: MQLFTSFSLLAVASFASAHGIVTDISSGNDWWTLSNPFRDPYMNPVPDRVGWSFFGAGNGPVPDFTTKDIVCNQFAKPGKLSATIAAGSDLTFYWTVWPESHKGPVLTYLANCNGDCSQVQDPSTLSYFKIDHAGLEDGVWVSDKIIANNNSWTVKIPSDIAPGNYLVRHELLALHSAGQDLGAQFYPVCINFKITGSGNAKPAGVTFPGAYKRTDPGILVNIYNGIKSYIIPGPAPYVEGGSPGNSAEPQPQHTSTAVSTAKTASTSSLTTSVTITSQAPSNTANPPQSITTTTTPKPQSTNINPTSLKTVTTSLRREQLINLCLDDINRQIAAAQPKNGGPVNFSNIEKKREDCYKI.

The N-terminal stretch at Met1–Ala18 is a signal peptide. Cu(2+) contacts are provided by His19 and His102. Disulfide bonds link Cys72–Cys190 and Cys113–Cys117. N-linked (GlcNAc...) asparagine glycosylation occurs at Asn150. Residues His176 and Gln185 each coordinate O2. Cu(2+) is bound at residue Tyr187. A disordered region spans residues Gly241–Lys310. Positions Gly245–His254 are enriched in polar residues. Positions Thr255–Ile304 are enriched in low complexity. N-linked (GlcNAc...) asparagine glycosylation is present at Asn345.

This sequence belongs to the polysaccharide monooxygenase AA9 family. Cu(2+) is required as a cofactor.

It is found in the secreted. The enzyme catalyses [(1-&gt;4)-beta-D-glucosyl]n+m + reduced acceptor + O2 = 4-dehydro-beta-D-glucosyl-[(1-&gt;4)-beta-D-glucosyl]n-1 + [(1-&gt;4)-beta-D-glucosyl]m + acceptor + H2O.. Its function is as follows. Lytic polysaccharide monooxygenase (LPMO) that depolymerizes crystalline and amorphous polysaccharides via the oxidation of scissile alpha- or beta-(1-4)-glycosidic bonds, yielding C1 and C4 oxidation products. Catalysis by LPMOs requires the reduction of the active-site copper from Cu(II) to Cu(I) by a reducing agent and H(2)O(2) or O(2) as a cosubstrate. Active on cellulose and on xyloglucan for deconstruction of plant biomass. This is AA9 family lytic polysaccharide monooxygenase B from Geotrichum candidum (Oospora lactis).